Reading from the N-terminus, the 98-residue chain is Co-chaperonin GroES 3 (98 aa).

This sequence belongs to the GroES chaperonin family. Heptamer of 7 subunits arranged in a ring. Interacts with the chaperonin GroEL.

The protein localises to the cytoplasm. Its function is as follows. Together with the chaperonin GroEL, plays an essential role in assisting protein folding. The GroEL-GroES system forms a nano-cage that allows encapsulation of the non-native substrate proteins and provides a physical environment optimized to promote and accelerate protein folding. GroES binds to the apical surface of the GroEL ring, thereby capping the opening of the GroEL channel. The sequence is that of Co-chaperonin GroES 3 from Mesorhizobium japonicum (strain LMG 29417 / CECT 9101 / MAFF 303099) (Mesorhizobium loti (strain MAFF 303099)).